Here is a 1059-residue protein sequence, read N- to C-terminus: RNA-binding protein 26 (1059 aa).

Basic and acidic residues-rich tracts occupy residues 98-114 (EKEIKKDEVNKEEEKEK) and 130-147 (RHKDTRENRKRSNSDRES). Positions 98 to 275 (EKEIKKDEVN…PVDNSYASGS (178 aa)) are disordered. The segment covering 172-182 (LNSNKVQNAKN) has biased composition (polar residues). Over residues 184–213 (RSRDDRKRDDRFRKREYDRNVPRRDSYRDR) the composition is skewed to basic and acidic residues. Residues 214-231 (YNRRRGRSRSYSRSRSRS) are compositionally biased toward basic residues. Residues 232–266 (WSKERQRDRDRSRSRTRSRDKDSGKPKFDLDRPDP) are compositionally biased toward basic and acidic residues. Residues 327–355 (QMQKKRCRDYDEKGFCMRGDMCPFDHGSD) form a C3H1-type zinc finger. The span at 375-428 (PVLEGPPPPGLPPPPSLLTPPPVNLQPPPVPPPGPLPPSLPPVTGPPPPLPPLQ) shows a compositional bias: pro residues. Residues 375-443 (PVLEGPPPPG…APPNSATSSV (69 aa)) are disordered. A compositionally biased stretch (low complexity) spans 434-443 (APPNSATSSV). The 75-residue stretch at 581–655 (TKLELRRIPP…RFIRMYWHRE (75 aa)) folds into the RRM 1 domain. A coiled-coil region spans residues 771–873 (GDAQKKKQEA…LLDTELDLYN (103 aa)). An RRM 2 domain is found at 942–1011 (RALKISGFTE…QDLKLAWNKP (70 aa)). Positions 1010–1059 (KPVPNASSTEVEDADQEEEEFHEDSIVDDSLLQDDDEEEEDDNESRSWRR) are disordered. 2 stretches are compositionally biased toward acidic residues: residues 1019 to 1031 (EVEDADQEEEEFH) and 1040 to 1052 (LLQDDDEEEEDDN).

Its function is as follows. May be involved in the turnover of nuclear polyadenylated (pA+) RNA. The polypeptide is RNA-binding protein 26 (Xenopus laevis (African clawed frog)).